The following is a 343-amino-acid chain: Small ribosomal subunit biogenesis GTPase RsgA (343 aa).

The region spanning 116 to 275 (RGQLKPVAAN…LIDSPGIREF (160 aa)) is the CP-type G domain. Residues 163 to 166 (NKAD) and 217 to 225 (GQSGVGKSS) contribute to the GTP site. Cysteine 299, cysteine 304, histidine 306, and cysteine 312 together coordinate Zn(2+).

Belongs to the TRAFAC class YlqF/YawG GTPase family. RsgA subfamily. In terms of assembly, monomer. Associates with 30S ribosomal subunit, binds 16S rRNA. Requires Zn(2+) as cofactor.

The protein localises to the cytoplasm. Functionally, one of several proteins that assist in the late maturation steps of the functional core of the 30S ribosomal subunit. Helps release RbfA from mature subunits. May play a role in the assembly of ribosomal proteins into the subunit. Circularly permuted GTPase that catalyzes slow GTP hydrolysis, GTPase activity is stimulated by the 30S ribosomal subunit. The sequence is that of Small ribosomal subunit biogenesis GTPase RsgA from Azotobacter vinelandii (strain DJ / ATCC BAA-1303).